The primary structure comprises 299 residues: Diphthine methyl ester synthase 1 (299 aa).

S-adenosyl-L-methionine contacts are provided by residues Leu-9, Asp-85, Gly-88, 113-114 (SV), Leu-164, Leu-222, and His-247.

The protein belongs to the diphthine synthase family.

It is found in the cytoplasm. It carries out the reaction 2-[(3S)-amino-3-carboxypropyl]-L-histidyl-[translation elongation factor 2] + 4 S-adenosyl-L-methionine = diphthine methyl ester-[translation elongation factor 2] + 4 S-adenosyl-L-homocysteine + 3 H(+). It participates in protein modification; peptidyl-diphthamide biosynthesis. In terms of biological role, S-adenosyl-L-methionine-dependent methyltransferase that catalyzes four methylations of the modified target histidine residue in translation elongation factor 2 (EF-2), to form an intermediate called diphthine methyl ester. The four successive methylation reactions represent the second step of diphthamide biosynthesis. This Candida albicans (strain SC5314 / ATCC MYA-2876) (Yeast) protein is Diphthine methyl ester synthase 1 (DPH5).